A 332-amino-acid polypeptide reads, in one-letter code: ATP-dependent 6-phosphofructokinase (332 aa).

Residue Gly11 participates in ATP binding. ADP is bound at residue 21-25 (RSVVR). Residues 72 to 73 (RC) and 102 to 105 (GDGS) each bind ATP. A Mg(2+)-binding site is contributed by Asp103. A substrate-binding site is contributed by 126–128 (TID). Asp128 serves as the catalytic Proton acceptor. Residue Arg155 coordinates ADP. Substrate contacts are provided by residues Arg163 and 170–172 (MGR). ADP-binding positions include 186 to 188 (GAE), Arg212, and 214 to 216 (KLH). Substrate-binding positions include Glu223, Arg256, and 262-265 (HIQR).

Belongs to the phosphofructokinase type A (PFKA) family. ATP-dependent PFK group I subfamily. Prokaryotic clade 'B1' sub-subfamily. Homotetramer. Requires Mg(2+) as cofactor.

Its subcellular location is the cytoplasm. The enzyme catalyses beta-D-fructose 6-phosphate + ATP = beta-D-fructose 1,6-bisphosphate + ADP + H(+). The protein operates within carbohydrate degradation; glycolysis; D-glyceraldehyde 3-phosphate and glycerone phosphate from D-glucose: step 3/4. Allosterically activated by ADP and other diphosphonucleosides, and allosterically inhibited by phosphoenolpyruvate. Catalyzes the phosphorylation of D-fructose 6-phosphate to fructose 1,6-bisphosphate by ATP, the first committing step of glycolysis. The sequence is that of ATP-dependent 6-phosphofructokinase from Halothermothrix orenii (strain H 168 / OCM 544 / DSM 9562).